The following is a 180-amino-acid chain: Der GTPase-activating protein YihI (180 aa).

2 disordered regions span residues 1–88 (MTRK…KERR) and 147–180 (PEVTEEAPVRKGAKTDEDLLDQFENMDLDSFGKE). Composition is skewed to basic and acidic residues over residues 18-33 (FREKSTTQVDVEARKS), 50-67 (EALDPKHYANGQKKDPRL), 77-88 (VEKKPTTKKERR), and 153-163 (APVRKGAKTDE). Positions 164–173 (DLLDQFENMD) are enriched in acidic residues.

Belongs to the YihI family. Interacts with Der.

A GTPase-activating protein (GAP) that modifies Der/EngA GTPase function. May play a role in ribosome biogenesis. The polypeptide is Der GTPase-activating protein YihI (Photobacterium profundum (strain SS9)).